Consider the following 1204-residue polypeptide: Erythroid differentiation-related factor 1 (1204 aa).

Disordered regions lie at residues 1–30, 220–264, 483–527, and 586–613; these read MGDA…QAES, QPVS…ASSQ, PKKE…SDDS, and KKES…RGGP. 3 stretches are compositionally biased toward low complexity: residues 9 to 30, 223 to 241, and 253 to 263; these read AEGP…QAES, SSTT…NDSE, and SSVSEDPSASS. The segment covering 496-513 has biased composition (acidic residues); the sequence is NSDESYSEEEEEMPDSDE. 2 TPR repeats span residues 693–726 and 920–953; these read CCLC…QNAN and DIHP…LSRK.

The protein localises to the nucleus. Functionally, transcription factor involved in erythroid differentiation. Involved in transcriptional activation of the globin gene. The chain is Erythroid differentiation-related factor 1 (EDRF1) from Pongo abelii (Sumatran orangutan).